A 432-amino-acid polypeptide reads, in one-letter code: Keratin, type I cytoskeletal 17 (432 aa).

Positions 1-24 (MTTSIRQFTSSSSIKGSSGLGGGS) are disordered. A head region spans residues 1 to 83 (MTTSIRQFTS…GGVDGLLAGG (83 aa)). 2 positions are modified to phosphoserine: Ser-12 and Ser-13. A Glycyl lysine isopeptide (Lys-Gly) (interchain with G-Cter in SUMO1); alternate cross-link involves residue Lys-15. Lys-15 is covalently cross-linked (Glycyl lysine isopeptide (Lys-Gly) (interchain with G-Cter in SUMO2); alternate). 3 positions are modified to phosphoserine: Ser-25, Ser-32, and Ser-39. At Ser-44 the chain carries Phosphoserine; by RPS6KA1. The coil 1A stretch occupies residues 84 to 120 (EKATMQNLNDRLASYLDKVRALEEANTELEVKIRDWY). Residues 84-395 (EKATMQNLND…RLLEGEDAHL (312 aa)) enclose the IF rod domain. Residues 102 to 116 (VRALEEANTELEVKI) form a peptide epitope S1; induces T-cell and keratinocyte proliferation and IFN-gamma production region. A Phosphothreonine modification is found at Thr-110. The linker 1 stretch occupies residues 121–138 (QRQAPGPARDYSQYYRTI). The coil 1B stretch occupies residues 139 to 230 (EELQNKILTA…NHEEEMNALR (92 aa)). The peptide epitope S2; induces T-cell proliferation and IFN-gamma production stretch occupies residues 153–167 (ANILLQIDNARLAAD). Residues 231–250 (GQVGGEINVEMDAAPGVDLS) form a linker 12 region. The interval 251–392 (RILNEMRDQY…TYRRLLEGED (142 aa)) is coil 2. Lys-278 is covalently cross-linked (Glycyl lysine isopeptide (Lys-Gly) (interchain with G-Cter in SUMO2)). Thr-279 is modified (phosphothreonine). Ser-323 bears the Phosphoserine mark. Residues 332-346 (ENRYCVQLSQIQGLI) form a peptide epitope S4; induces T-cell and keratinocyte proliferation and IFN-gamma production region. Positions 393–432 (AHLTQYKKEPVTTRQVRTIVEEVQDGKVISSREQVHQTTR) are tail. Residues Lys-399, Lys-400, and Lys-419 each participate in a glycyl lysine isopeptide (Lys-Gly) (interchain with G-Cter in SUMO1); alternate cross-link. Residues Lys-399, Lys-400, and Lys-419 each participate in a glycyl lysine isopeptide (Lys-Gly) (interchain with G-Cter in SUMO2); alternate cross-link.

Belongs to the intermediate filament family. Heterodimer of a type I and a type II keratin. KRT17 associates with KRT6 isomers (KRT6A or KRT6B). Interacts with TRADD and SFN. Post-translationally, phosphorylation at Ser-44 occurs in a growth- and stress-dependent fashion in skin keratinocytes, it has no effect on filament organization. Expressed in the outer root sheath and medulla region of hair follicle specifically from eyebrow and beard, digital pulp, nail matrix and nail bed epithelium, mucosal stratified squamous epithelia and in basal cells of oral epithelium, palmoplantar epidermis and sweat and mammary glands. Also expressed in myoepithelium of prostate, basal layer of urinary bladder, cambial cells of sebaceous gland and in exocervix (at protein level).

It localises to the cytoplasm. Functionally, type I keratin involved in the formation and maintenance of various skin appendages, specifically in determining shape and orientation of hair. Required for the correct growth of hair follicles, in particular for the persistence of the anagen (growth) state. Modulates the function of TNF-alpha in the specific context of hair cycling. Regulates protein synthesis and epithelial cell growth through binding to the adapter protein SFN and by stimulating Akt/mTOR pathway. Involved in tissue repair. May be a marker of basal cell differentiation in complex epithelia and therefore indicative of a certain type of epithelial 'stem cells'. Acts as a promoter of epithelial proliferation by acting a regulator of immune response in skin: promotes Th1/Th17-dominated immune environment contributing to the development of basaloid skin tumors. May act as an autoantigen in the immunopathogenesis of psoriasis, with certain peptide regions being a major target for autoreactive T-cells and hence causing their proliferation. In Homo sapiens (Human), this protein is Keratin, type I cytoskeletal 17 (KRT17).